We begin with the raw amino-acid sequence, 378 residues long: Dihydroorotate dehydrogenase (quinone) (378 aa).

FMN contacts are provided by residues 77–81 (AGFDK) and T101. K81 provides a ligand contact to substrate. 126 to 130 (NRMGF) is a substrate binding site. Residues N158 and N191 each contribute to the FMN site. N191 is a binding site for substrate. S194 functions as the Nucleophile in the catalytic mechanism. A substrate-binding site is contributed by N196. Residues K229 and T257 each contribute to the FMN site. Residue 258–259 (NT) participates in substrate binding. Residues G287, G316, and 337-338 (YT) contribute to the FMN site.

The protein belongs to the dihydroorotate dehydrogenase family. Type 2 subfamily. In terms of assembly, monomer. The cofactor is FMN.

Its subcellular location is the cell membrane. The enzyme catalyses (S)-dihydroorotate + a quinone = orotate + a quinol. It participates in pyrimidine metabolism; UMP biosynthesis via de novo pathway; orotate from (S)-dihydroorotate (quinone route): step 1/1. Catalyzes the conversion of dihydroorotate to orotate with quinone as electron acceptor. This Synechococcus elongatus (strain ATCC 33912 / PCC 7942 / FACHB-805) (Anacystis nidulans R2) protein is Dihydroorotate dehydrogenase (quinone).